The following is a 663-amino-acid chain: Transmembrane 9 superfamily member 2 (663 aa).

The first 28 residues, 1–28, serve as a signal peptide directing secretion; that stretch reads MSARLPVLSPPRWPRLLLLSLLLLGAVP. Topologically, residues 29 to 300 are lumenal; the sequence is GPRRSGGFYL…LESMPHTHIQ (272 aa). The chain crosses the membrane as a helical span at residues 301-321; it reads WFSIMNSLVIVLFLSGMVAMI. Topologically, residues 322-374 are cytoplasmic; the sequence is MLRTLHKDIARYNQMDSTEDAQEEFGWKLVHGDIFRPPRKGMLLSVFLGSGTQ. A helical transmembrane segment spans residues 375–395; sequence ILIMTFVTLFFACLGFLSPAN. The Lumenal segment spans residues 396–398; the sequence is RGA. The chain crosses the membrane as a helical span at residues 399 to 419; the sequence is LMTCAVVLWVLLGTPAGYVAA. The Cytoplasmic portion of the chain corresponds to 420–437; it reads RFYKSFGGEKWKTNVLLT. The helical transmembrane segment at 438 to 458 threads the bilayer; sequence SFLCPGIVFADFFIMNLILWG. The Lumenal portion of the chain corresponds to 459 to 466; sequence EGSSAAIP. Residues 467–487 form a helical membrane-spanning segment; it reads FGTLVAILALWFCISVPLTFI. Topologically, residues 488–522 are cytoplasmic; the sequence is GAYFGFKKNAIEHPVRTNQIPRQIPEQSFYTKPLP. A helical transmembrane segment spans residues 523 to 543; the sequence is GIIMGGILPFGCIFIQLFFIL. The Lumenal segment spans residues 544–554; sequence NSIWSHQMYYM. Residues 555-575 traverse the membrane as a helical segment; sequence FGFLFLVFIILVITCSEATIL. Over 576–591 the chain is Cytoplasmic; it reads LCYFHLCAEDYHWQWR. The helical transmembrane segment at 592–612 threads the bilayer; sequence SFLTSGFTAVYFLIYAVHYFF. Topologically, residues 613–631 are lumenal; that stretch reads SKLQITGTASTILYFGYTM. The helical transmembrane segment at 632–652 threads the bilayer; it reads IMVLIFFLFTGTIGFFACFWF. Topologically, residues 653–663 are cytoplasmic; the sequence is VTKIYSVVKVD.

Belongs to the nonaspanin (TM9SF) (TC 9.A.2) family.

The protein resides in the endosome membrane. Its subcellular location is the golgi outpost. It localises to the cytoplasm. The protein localises to the cytoskeleton. It is found in the microtubule organizing center. In terms of biological role, in the intracellular compartments, may function as a channel or small molecule transporter. The chain is Transmembrane 9 superfamily member 2 (TM9SF2) from Pongo abelii (Sumatran orangutan).